A 429-amino-acid chain; its full sequence is MNQTCKVCGEPAAGFHFGAFTCEGCKSFFGRSYNNISTISECKNEGKCIIDKKNRTTCKACRLRKCYNVGMSKGGSRYGRRSNWFKIHCLLQEHEQAAAAAGKAPPLAGGVSVGGAPSASSPVGSPHTPGFGDMAAHLHHHHQQQQQQQVPRHPHMPLLGYPSYLSDPSAALPFFSMMGGVPHQSPFQLPPHLLFPGYHASAAAAAASAADAAYRQEMYKHRQSVDSVESQNRFSPASQPPVVQPTSSARQSPIDVCLEEDVHSVHSHQSSASLLHPIAIRATPTTPTSSSPLSFAAKMQSLSPVSVCSIGGETTSVVPVHPPTVSAQEGPMDLSMKTSRSSVHSFNDSGSEDQEVEVAPRRKFYQLEAECLTTSSSSSSHSAAHSPNTTTAHAEVKRQKLGGAEATHFGGFAVAHNAASAMRGIFVCV.

Positions 2–78 form a DNA-binding region, nuclear receptor; that stretch reads NQTCKVCGEP…VGMSKGGSRY (77 aa). NR C4-type zinc fingers lie at residues 5-25 and 42-66; these read CKVCGEPAAGFHFGAFTCEGC and CKNEGKCIIDKKNRTTCKACRLRKC. A compositionally biased stretch (low complexity) spans 112–126; sequence SVGGAPSASSPVGSP. Disordered stretches follow at residues 112-148, 223-250, 338-357, and 375-397; these read SVGGAPSASSPVGSPHTPGFGDMAAHLHHHHQQQQQQ, QSVDSVESQNRFSPASQPPVVQPTSSAR, TSRSSVHSFNDSGSEDQEVE, and SSSSSSHSAAHSPNTTTAHAEVK. Composition is skewed to polar residues over residues 225–237 and 338–349; these read VDSVESQNRFSPA and TSRSSVHSFNDS. Positions 375 to 393 are enriched in low complexity; it reads SSSSSSHSAAHSPNTTTAH.

It belongs to the nuclear hormone receptor family. NR0 subfamily.

The protein localises to the nucleus. Its function is as follows. Transcriptional repressor. Binds to multiple sites in the eve stripe 3 enhancer element. Plays an essential role in the segmentation process both by refining the expression patterns of gap genes and by establishing pair-rules stripes of gene expression. In Drosophila melanogaster (Fruit fly), this protein is Zygotic gap protein knirps (kni).